Here is a 145-residue protein sequence, read N- to C-terminus: MKGLLQRVRGARVEVAGEIVGAVDQGLLVLVAVEPSDTPESADKLLHKLLNYRVFSDDEGKMNLSLKDIDGGLLLVSQFTLAADTKSGLRPSFSTAAPPALGAALFDHLLLQAQQLHGKVASGRFGADMQVHLVNDGPVTFLLQT.

Residues 137–138 carry the Gly-cisPro motif, important for rejection of L-amino acids motif; it reads GP.

This sequence belongs to the DTD family. In terms of assembly, homodimer.

The protein resides in the cytoplasm. It catalyses the reaction glycyl-tRNA(Ala) + H2O = tRNA(Ala) + glycine + H(+). The catalysed reaction is a D-aminoacyl-tRNA + H2O = a tRNA + a D-alpha-amino acid + H(+). Its function is as follows. An aminoacyl-tRNA editing enzyme that deacylates mischarged D-aminoacyl-tRNAs. Also deacylates mischarged glycyl-tRNA(Ala), protecting cells against glycine mischarging by AlaRS. Acts via tRNA-based rather than protein-based catalysis; rejects L-amino acids rather than detecting D-amino acids in the active site. By recycling D-aminoacyl-tRNA to D-amino acids and free tRNA molecules, this enzyme counteracts the toxicity associated with the formation of D-aminoacyl-tRNA entities in vivo and helps enforce protein L-homochirality. This Pseudomonas fluorescens (strain SBW25) protein is D-aminoacyl-tRNA deacylase.